A 765-amino-acid polypeptide reads, in one-letter code: 5-methyltetrahydropteroyltriglutamate--homocysteine methyltransferase (765 aa).

The 5-methyltetrahydropteroyltri-L-glutamate site is built by Lys18 and Asn116. Residues 437 to 439 (IGS) and Glu490 each bind L-homocysteine. L-methionine-binding positions include 437–439 (IGS) and Glu490. Residues Asp495, Tyr518, 521-522 (RC), and Trp567 contribute to the 5-methyltetrahydropteroyltri-L-glutamate site. Position 605 (Asp605) interacts with L-homocysteine. Residue Asp605 participates in L-methionine binding. Zn(2+)-binding residues include His647, Cys649, His658, Asp662, and Glu671. The Proton donor role is filled by His701. Residue Cys733 coordinates Zn(2+).

This sequence belongs to the vitamin-B12 independent methionine synthase family. The cofactor is Zn(2+).

The protein resides in the cytoplasm. The enzyme catalyses 5-methyltetrahydropteroyltri-L-glutamate + L-homocysteine = tetrahydropteroyltri-L-glutamate + L-methionine. It functions in the pathway amino-acid biosynthesis; L-methionine biosynthesis via de novo pathway; L-methionine from L-homocysteine (MetE route): step 1/1. In terms of biological role, catalyzes the transfer of a methyl group from 5-methyltetrahydrofolate to homocysteine resulting in methionine formation. This is 5-methyltetrahydropteroyltriglutamate--homocysteine methyltransferase (METE) from Mesembryanthemum crystallinum (Common ice plant).